The primary structure comprises 199 residues: MIIHNLGIKDYTEIWEQMKEFTAVRDSNSYDELWLLEHYPVYTQGQAGKPEHVLNPNSIKIVQSDRGGQVTYHGPGQLVAYVLMDIRRRNLGIRTLVAKLEEILISVLEHYRIPANIRSGAPGVYVGEKKIASIGLRVKNGCTYHGIALNVNMDLSPFLGINPCGFAKMEMTQMSHFHPNIQLEEVSQHFVQYFLTQFK.

The 173-residue stretch at 27-199 (SNSYDELWLL…FVQYFLTQFK (173 aa)) folds into the BPL/LPL catalytic domain. Residues 66–73 (RGGQVTYH), 133–135 (SIG), and 146–148 (GIA) contribute to the substrate site. The Acyl-thioester intermediate role is filled by cysteine 164.

This sequence belongs to the LipB family.

Its subcellular location is the cytoplasm. The catalysed reaction is octanoyl-[ACP] + L-lysyl-[protein] = N(6)-octanoyl-L-lysyl-[protein] + holo-[ACP] + H(+). The protein operates within protein modification; protein lipoylation via endogenous pathway; protein N(6)-(lipoyl)lysine from octanoyl-[acyl-carrier-protein]: step 1/2. Catalyzes the transfer of endogenously produced octanoic acid from octanoyl-acyl-carrier-protein onto the lipoyl domains of lipoate-dependent enzymes. Lipoyl-ACP can also act as a substrate although octanoyl-ACP is likely to be the physiological substrate. In Legionella pneumophila (strain Lens), this protein is Octanoyltransferase.